Consider the following 337-residue polypeptide: Holliday junction branch migration complex subunit RuvB (337 aa).

Residues 1-20 are disordered; the sequence is MQTRFVSPVNHDEEQDEPSV. Positions 1–181 are large ATPase domain (RuvB-L); the sequence is MQTRFVSPVN…FGIILRLDLY (181 aa). ATP is bound by residues R21, G62, K65, T66, T67, 128 to 130, R171, Y181, and R218; that span reads EDY. Mg(2+) is bound at residue T66. A small ATPAse domain (RuvB-S) region spans residues 182–252; sequence DPSELTVIVT…IANTALFALG (71 aa). Residues 255-337 are head domain (RuvB-H); the sequence is QKGLDILDRR…SHTRDLTSFL (83 aa). Residues R310 and R315 each contribute to the DNA site.

Belongs to the RuvB family. In terms of assembly, homohexamer. Forms an RuvA(8)-RuvB(12)-Holliday junction (HJ) complex. HJ DNA is sandwiched between 2 RuvA tetramers; dsDNA enters through RuvA and exits via RuvB. An RuvB hexamer assembles on each DNA strand where it exits the tetramer. Each RuvB hexamer is contacted by two RuvA subunits (via domain III) on 2 adjacent RuvB subunits; this complex drives branch migration. In the full resolvosome a probable DNA-RuvA(4)-RuvB(12)-RuvC(2) complex forms which resolves the HJ.

It is found in the cytoplasm. The enzyme catalyses ATP + H2O = ADP + phosphate + H(+). Its function is as follows. The RuvA-RuvB-RuvC complex processes Holliday junction (HJ) DNA during genetic recombination and DNA repair, while the RuvA-RuvB complex plays an important role in the rescue of blocked DNA replication forks via replication fork reversal (RFR). RuvA specifically binds to HJ cruciform DNA, conferring on it an open structure. The RuvB hexamer acts as an ATP-dependent pump, pulling dsDNA into and through the RuvAB complex. RuvB forms 2 homohexamers on either side of HJ DNA bound by 1 or 2 RuvA tetramers; 4 subunits per hexamer contact DNA at a time. Coordinated motions by a converter formed by DNA-disengaged RuvB subunits stimulates ATP hydrolysis and nucleotide exchange. Immobilization of the converter enables RuvB to convert the ATP-contained energy into a lever motion, pulling 2 nucleotides of DNA out of the RuvA tetramer per ATP hydrolyzed, thus driving DNA branch migration. The RuvB motors rotate together with the DNA substrate, which together with the progressing nucleotide cycle form the mechanistic basis for DNA recombination by continuous HJ branch migration. Branch migration allows RuvC to scan DNA until it finds its consensus sequence, where it cleaves and resolves cruciform DNA. The polypeptide is Holliday junction branch migration complex subunit RuvB (Methanospirillum hungatei JF-1 (strain ATCC 27890 / DSM 864 / NBRC 100397 / JF-1)).